Here is a 360-residue protein sequence, read N- to C-terminus: Phospho-N-acetylmuramoyl-pentapeptide-transferase (360 aa).

A run of 10 helical transmembrane segments spans residues 26-46, 72-92, 94-114, 132-152, 168-188, 199-219, 236-256, 263-283, 288-308, and 338-358; these read AIVS…RLIA, PTMG…LWAY, SNPY…VGFV, WKYF…YITG, VMPQ…VGTG, GLAI…AWAT, AGEL…FLWF, VFMG…IAVL, FLLV…ILQV, and VIVR…ATLK.

This sequence belongs to the glycosyltransferase 4 family. MraY subfamily. Mg(2+) serves as cofactor.

It is found in the cell inner membrane. It carries out the reaction UDP-N-acetyl-alpha-D-muramoyl-L-alanyl-gamma-D-glutamyl-meso-2,6-diaminopimeloyl-D-alanyl-D-alanine + di-trans,octa-cis-undecaprenyl phosphate = di-trans,octa-cis-undecaprenyl diphospho-N-acetyl-alpha-D-muramoyl-L-alanyl-D-glutamyl-meso-2,6-diaminopimeloyl-D-alanyl-D-alanine + UMP. The protein operates within cell wall biogenesis; peptidoglycan biosynthesis. Catalyzes the initial step of the lipid cycle reactions in the biosynthesis of the cell wall peptidoglycan: transfers peptidoglycan precursor phospho-MurNAc-pentapeptide from UDP-MurNAc-pentapeptide onto the lipid carrier undecaprenyl phosphate, yielding undecaprenyl-pyrophosphoryl-MurNAc-pentapeptide, known as lipid I. The polypeptide is Phospho-N-acetylmuramoyl-pentapeptide-transferase (Cronobacter sakazakii (strain ATCC BAA-894) (Enterobacter sakazakii)).